A 233-amino-acid chain; its full sequence is Ion-translocating oxidoreductase complex subunit E (233 aa).

The next 6 helical transmembrane spans lie at 18 to 38 (ALVQLLGLCPLLAVSSTATNA), 39 to 59 (LGLGLATTLVLVCTNTAVSAL), 69 to 89 (IPIYVMIIASVVSTVQMLINA), 92 to 112 (FGLYQSLGIFIPLIVTNCIVI), 128 to 148 (ALDGFAMGMGATCALFVLGAL), and 182 to 202 (PFLLAMLPPGAFIGLGLLLAG).

The protein belongs to the NqrDE/RnfAE family. In terms of assembly, the complex is composed of six subunits: RnfA, RnfB, RnfC, RnfD, RnfE and RnfG.

The protein resides in the cell inner membrane. In terms of biological role, part of a membrane-bound complex that couples electron transfer with translocation of ions across the membrane. The protein is Ion-translocating oxidoreductase complex subunit E of Yersinia pseudotuberculosis serotype O:3 (strain YPIII).